The primary structure comprises 138 residues: Cellular retinoic acid-binding protein 2 (138 aa).

Residues 21 to 31 carry the Nuclear localization signal motif; it reads KVLGVNVMLRK. Lys102 participates in a covalent cross-link: Glycyl lysine isopeptide (Lys-Gly) (interchain with G-Cter in SUMO). Position 133–135 (133–135) interacts with all-trans-retinoate; it reads RVY.

This sequence belongs to the calycin superfamily. Fatty-acid binding protein (FABP) family. Interacts with importin alpha, RXR and RARA. Post-translationally, sumoylated in response to retinoic acid binding, sumoylation is critical for dissociation from ER and subsequent nuclear translocation.

The protein localises to the cytoplasm. Its subcellular location is the endoplasmic reticulum. The protein resides in the nucleus. In terms of biological role, transports retinoic acid to the nucleus. Regulates the access of retinoic acid to the nuclear retinoic acid receptors. This is Cellular retinoic acid-binding protein 2 (CRABP2) from Bos taurus (Bovine).